We begin with the raw amino-acid sequence, 382 residues long: Na(+)/H(+) antiporter NhaA 2 (382 aa).

12 consecutive transmembrane segments (helical) span residues 7–27 (AGGV…NSYL), 28–48 (SGFY…AFEI), 52–72 (LLLW…GLEV), 88–108 (VLPG…YASF), 118–138 (GWAI…SLFG), 147–167 (LFLL…IALF), 170–190 (HELS…LFVL), 206–226 (LVVW…GFVI), 254–274 (VAYF…LGGI), 285–305 (LGII…VCWL), 325–345 (GVCL…SLAF), and 356–376 (VKLG…LILT).

This sequence belongs to the NhaA Na(+)/H(+) (TC 2.A.33) antiporter family.

It is found in the cell inner membrane. It catalyses the reaction Na(+)(in) + 2 H(+)(out) = Na(+)(out) + 2 H(+)(in). Its function is as follows. Na(+)/H(+) antiporter that extrudes sodium in exchange for external protons. The chain is Na(+)/H(+) antiporter NhaA 2 from Saccharophagus degradans (strain 2-40 / ATCC 43961 / DSM 17024).